The primary structure comprises 283 residues: Pantothenate synthetase (283 aa).

30-37 provides a ligand contact to ATP; it reads MGALHEGH. The active-site Proton donor is the His-37. Gln-61 lines the (R)-pantoate pocket. Position 61 (Gln-61) interacts with beta-alanine. Position 147–150 (147–150) interacts with ATP; the sequence is GEKD. Gln-153 provides a ligand contact to (R)-pantoate. Residues Val-176 and 184–187 each bind ATP; that span reads VSSR.

It belongs to the pantothenate synthetase family. Homodimer.

It localises to the cytoplasm. It catalyses the reaction (R)-pantoate + beta-alanine + ATP = (R)-pantothenate + AMP + diphosphate + H(+). Its pathway is cofactor biosynthesis; (R)-pantothenate biosynthesis; (R)-pantothenate from (R)-pantoate and beta-alanine: step 1/1. Its function is as follows. Catalyzes the condensation of pantoate with beta-alanine in an ATP-dependent reaction via a pantoyl-adenylate intermediate. The chain is Pantothenate synthetase from Chlorobium luteolum (strain DSM 273 / BCRC 81028 / 2530) (Pelodictyon luteolum).